Here is a 215-residue protein sequence, read N- to C-terminus: MPSYTLNYFNHRGRAEICRMLFAAAGVQYNDRRIETSEWSNMRSKMPCSMMPMLDIDNRHQIPQTMAIARYLAREFGFHGKNNMEMARVEYISDCFYDILDDYLRMYQDDNCRMMFQRSGDRNGSSEKRTRYQETLRRILPFMERTLEMYKSGGQFFMGDQMTMADMMCYCALENPIMEESSLLNSYPKLQALRTRVMSHLKMSPYLKKRSSTEF.

Positions 2–80 constitute a GST N-terminal domain; it reads PSYTLNYFNH…YLAREFGFHG (79 aa). In terms of domain architecture, GST C-terminal spans 82-215; sequence NNMEMARVEY…YLKKRSSTEF (134 aa).

Belongs to the GST superfamily. Lens.

Its function is as follows. S-crystallins are structural components of squids and octopi eye lens. Contains relatively little if any GST activity. This is S-crystallin 2 from Enteroctopus dofleini (North Pacific giant octopus).